The chain runs to 320 residues: o-succinylbenzoate synthase (320 aa).

Residue K133 is the Proton donor of the active site. Mg(2+)-binding residues include D161, E190, and D213. The active-site Proton acceptor is K235.

It belongs to the mandelate racemase/muconate lactonizing enzyme family. MenC type 1 subfamily. A divalent metal cation serves as cofactor.

It carries out the reaction (1R,6R)-6-hydroxy-2-succinyl-cyclohexa-2,4-diene-1-carboxylate = 2-succinylbenzoate + H2O. It participates in quinol/quinone metabolism; 1,4-dihydroxy-2-naphthoate biosynthesis; 1,4-dihydroxy-2-naphthoate from chorismate: step 4/7. The protein operates within quinol/quinone metabolism; menaquinone biosynthesis. Functionally, converts 2-succinyl-6-hydroxy-2,4-cyclohexadiene-1-carboxylate (SHCHC) to 2-succinylbenzoate (OSB). The sequence is that of o-succinylbenzoate synthase from Salmonella typhi.